The primary structure comprises 621 residues: Chaperone protein dnaK (621 aa).

Residues Val597–Ala621 are disordered.

It belongs to the heat shock protein 70 family.

The protein localises to the plastid. It is found in the chloroplast. Acts as a chaperone. The sequence is that of Chaperone protein dnaK from Gracilaria tenuistipitata var. liui (Red alga).